Reading from the N-terminus, the 130-residue chain is Odontogenesis associated phosphoprotein (130 aa).

Residues 1 to 23 form the signal peptide; the sequence is MARRHCFSYWLLVCWLVVTVAEG.

Highly expressed in placenta.

It is found in the secreted. May promote nucleation of hydroxyapatite. In Homo sapiens (Human), this protein is Odontogenesis associated phosphoprotein.